We begin with the raw amino-acid sequence, 2104 residues long: Replication polyprotein (2104 aa).

Transmembrane regions (helical) follow at residues L23–S43 and F70–I90. Residues V289–L313 adopt a coiled-coil conformation. Residues L329–D501 enclose the SF3 helicase domain. A viral peptidase region spans residues G1499–H1520. Residues P1838–Y1965 enclose the RdRp catalytic domain.

In terms of processing, specific enzymatic cleavages in vivo yield mature proteins.

The protein resides in the membrane. It carries out the reaction RNA(n) + a ribonucleoside 5'-triphosphate = RNA(n+1) + diphosphate. Functionally, the peptidase activity is involved in polyprotein maturation, possibly along with hosts proteases. Transmembrane protein may be surface viral glycoprotein. RNA-directed RNA polymerase replicates the viral genome. The sequence is that of Replication polyprotein from Drosophila melanogaster (Fruit fly).